Here is a 424-residue protein sequence, read N- to C-terminus: Adenylosuccinate synthetase (424 aa).

Residues 12-18 (GDEGKGK) and 40-42 (GHT) each bind GTP. The active-site Proton acceptor is aspartate 13. Aspartate 13 and glycine 40 together coordinate Mg(2+). IMP-binding positions include 13–16 (DEGK), 38–41 (NAGH), threonine 130, arginine 144, asparagine 220, threonine 235, and arginine 299. Residue histidine 41 is the Proton donor of the active site. Residue 295–301 (VTTGRKR) coordinates substrate. GTP-binding positions include arginine 301, 327 to 329 (KLD), and 412 to 414 (GTG).

This sequence belongs to the adenylosuccinate synthetase family. In terms of assembly, homodimer. Mg(2+) serves as cofactor.

It localises to the cytoplasm. The catalysed reaction is IMP + L-aspartate + GTP = N(6)-(1,2-dicarboxyethyl)-AMP + GDP + phosphate + 2 H(+). The protein operates within purine metabolism; AMP biosynthesis via de novo pathway; AMP from IMP: step 1/2. In terms of biological role, plays an important role in the de novo pathway and in the salvage pathway of purine nucleotide biosynthesis. Catalyzes the first committed step in the biosynthesis of AMP from IMP. This is Adenylosuccinate synthetase (adB) from Emericella nidulans (strain FGSC A4 / ATCC 38163 / CBS 112.46 / NRRL 194 / M139) (Aspergillus nidulans).